We begin with the raw amino-acid sequence, 520 residues long: Dual specificity tyrosine-phosphorylation-regulated kinase 4 (520 aa).

A disordered region spans residues 1-32; sequence MPASELKASEIPFHPSIKTQDPKAEEKSPKKQ. The short motif at 19–37 is the Bipartite nuclear localization signal element; that stretch reads TQDPKAEEKSPKKQKVTLT. Over residues 20-29 the composition is skewed to basic and acidic residues; that stretch reads QDPKAEEKSP. One can recognise a Protein kinase domain in the interval 104 to 400; the sequence is YEVLETIGKG…PDQALKHAWI (297 aa). ATP-binding positions include 110 to 118, Lys-133, and 183 to 186; these read IGKGSFGQV and FELL. Asp-230 (proton acceptor) is an active-site residue. Tyr-264 carries the post-translational modification Phosphotyrosine; by autocatalysis. The disordered stretch occupies residues 404–467; that stretch reads RNLKPQPRPQ…KHVQHSGDQQ (64 aa). A compositionally biased stretch (basic and acidic residues) spans 439 to 457; sequence RKADEITKETTEKTKDSPT.

This sequence belongs to the protein kinase superfamily. CMGC Ser/Thr protein kinase family. MNB/DYRK subfamily. The cofactor is Mg(2+). In terms of processing, autophosphorylation on Tyr-264 in the activation loop is required for kinase activity.

Its subcellular location is the cytoplasm. The protein localises to the nucleus. It catalyses the reaction L-seryl-[protein] + ATP = O-phospho-L-seryl-[protein] + ADP + H(+). The enzyme catalyses L-threonyl-[protein] + ATP = O-phospho-L-threonyl-[protein] + ADP + H(+). It carries out the reaction L-tyrosyl-[protein] + ATP = O-phospho-L-tyrosyl-[protein] + ADP + H(+). Possible non-essential role in spermiogenesis. The chain is Dual specificity tyrosine-phosphorylation-regulated kinase 4 (DYRK4) from Homo sapiens (Human).